A 393-amino-acid polypeptide reads, in one-letter code: tRNA(Met) cytidine acetate ligase (393 aa).

ATP is bound by residues glycine 81, asparagine 142, and arginine 167.

This sequence belongs to the TmcAL family.

It is found in the cytoplasm. It carries out the reaction cytidine(34) in elongator tRNA(Met) + acetate + ATP = N(4)-acetylcytidine(34) in elongator tRNA(Met) + AMP + diphosphate. Functionally, catalyzes the formation of N(4)-acetylcytidine (ac(4)C) at the wobble position of elongator tRNA(Met), using acetate and ATP as substrates. First activates an acetate ion to form acetyladenylate (Ac-AMP) and then transfers the acetyl group to tRNA to form ac(4)C34. In Bacillus mycoides (strain KBAB4) (Bacillus weihenstephanensis), this protein is tRNA(Met) cytidine acetate ligase.